Reading from the N-terminus, the 419-residue chain is Subtilisin-like protease 2 (419 aa).

The N-terminal stretch at 1–16 (MQLLNFGLLLLPFVAG) is a signal peptide. Positions 17–122 (DLAPQPEPLL…VHPDQHVYLA (106 aa)) are excised as a propeptide. The region spanning 36 to 122 (QYIVTLKEGL…VHPDQHVYLA (87 aa)) is the Inhibitor I9 domain. One can recognise a Peptidase S8 domain in the interval 131 to 419 (RWGLGYMSSK…IQERKFKLPK (289 aa)). Catalysis depends on charge relay system residues Asp-169 and His-201. Asn-248, Asn-261, and Asn-348 each carry an N-linked (GlcNAc...) asparagine glycan. The Charge relay system role is filled by Ser-357. N-linked (GlcNAc...) asparagine glycosylation is present at Asn-388.

It belongs to the peptidase S8 family.

It localises to the secreted. Functionally, secreted subtilisin-like serine protease with keratinolytic activity that contributes to pathogenicity. The sequence is that of Subtilisin-like protease 2 (SUB2) from Trichophyton verrucosum (Cattle ringworm fungus).